Reading from the N-terminus, the 387-residue chain is Beta-carotene 4-ketolase (387 aa).

The interval 1–78 (MPHSIDMEDS…GNPTVDDASQ (78 aa)) is disordered. Polar residues-rich tracts occupy residues 43–53 (NWQTQYHSSEG) and 65–78 (DATTGNPTVDDASQ).

The catalysed reaction is echinenone + 2 AH2 + 2 O2 = canthaxanthin + 2 A + 3 H2O. It catalyses the reaction all-trans-beta-carotene + 2 AH2 + 2 O2 = echinenone + 2 A + 3 H2O. It functions in the pathway carotenoid biosynthesis. Involved in the biosynthesis of ketocarotenoids which are powerful anti-oxidative molecules. Catalyzes the conversion of beta-carotene to canthaxanthin via echinenone. The chain is Beta-carotene 4-ketolase from Protosiphon botryoides (Green alga).